The chain runs to 157 residues: Transcriptional repressor NrdR (157 aa).

Positions 1–24 (MRCPKCGGNKSSVVDSRQAEDGNT) are disordered. A zinc finger lies at 3–34 (CPKCGGNKSSVVDSRQAEDGNTIRRRRECEEC). An ATP-cone domain is found at 49-139 (LVVVKKDGTR…VYRSFKDVGE (91 aa)).

This sequence belongs to the NrdR family. The cofactor is Zn(2+).

Its function is as follows. Negatively regulates transcription of bacterial ribonucleotide reductase nrd genes and operons by binding to NrdR-boxes. In Streptococcus sanguinis (strain SK36), this protein is Transcriptional repressor NrdR.